We begin with the raw amino-acid sequence, 283 residues long: Pantothenate synthetase (283 aa).

Residue methionine 34–histidine 41 coordinates ATP. Histidine 41 acts as the Proton donor in catalysis. Glutamine 65 serves as a coordination point for (R)-pantoate. Glutamine 65 serves as a coordination point for beta-alanine. Residue glycine 152–aspartate 155 coordinates ATP. Position 158 (glutamine 158) interacts with (R)-pantoate. Methionine 189–arginine 192 contributes to the ATP binding site.

Belongs to the pantothenate synthetase family. As to quaternary structure, homodimer.

The protein resides in the cytoplasm. The enzyme catalyses (R)-pantoate + beta-alanine + ATP = (R)-pantothenate + AMP + diphosphate + H(+). Its pathway is cofactor biosynthesis; (R)-pantothenate biosynthesis; (R)-pantothenate from (R)-pantoate and beta-alanine: step 1/1. In terms of biological role, catalyzes the condensation of pantoate with beta-alanine in an ATP-dependent reaction via a pantoyl-adenylate intermediate. The sequence is that of Pantothenate synthetase from Rhodopseudomonas palustris (strain BisA53).